A 547-amino-acid chain; its full sequence is MNWQTKDELLALLTSLVQYESITGSKGEVALAEYLYFILKDKPYFQKHPDDVTLHPMDDGRSFLTALVKKKNVKKTVLLLSHFDVVDIEDYGEFKHMACKPAELLSSFLEKKELLPERVRRDAESGDWLFGRGTMDMKAGLCIQLSMLERAMNGHFEGNLLLITVPDEEVNSRGMIEAVPALKEMEKKHDITLTACLNAEPMFEKFPGDQQQYFYTGSIGKVLAGFFCKGIETHVGEPFSGLNANLMVSEINRLLELNADYCEKVDGEVTPPPVNLMQKDLKEAYSVQTPHTAVTLFNVLSMKRSASELHQMLLKTAEQAAEEIMSNVRKKTQDFQQFEPFQPIERDVTVLTFDELVSRAKKRAGISETERALNYAFANRGELGDRDFSTKIVSELASLCKEDAPLIVLFYSPPLYPAVSSKDDQLIRNTADQIKHYAAERYGIALREVQYFPGLSDLSYLQLEKQEVDAYTSNMPLFNRGYSLPSGKNQALYVPVLNVGPAGKDPHKWTERLYMPYSFEVLPDLLSFTISALLKQSESAGQLLREK.

This sequence to B.subtilis RocB.

This is an uncharacterized protein from Bacillus subtilis (strain 168).